A 1295-amino-acid chain; its full sequence is DNA-directed RNA polymerase subunit beta' (1295 aa).

4 residues coordinate Zn(2+): C60, C62, C75, and C78. Residues D516, D518, and D520 each contribute to the Mg(2+) site. Residues C841, C914, C921, and C924 each coordinate Zn(2+).

This sequence belongs to the RNA polymerase beta' chain family. The RNAP catalytic core consists of 2 alpha, 1 beta, 1 beta' and 1 omega subunit. When a sigma factor is associated with the core the holoenzyme is formed, which can initiate transcription. Mg(2+) serves as cofactor. It depends on Zn(2+) as a cofactor.

The catalysed reaction is RNA(n) + a ribonucleoside 5'-triphosphate = RNA(n+1) + diphosphate. Its function is as follows. DNA-dependent RNA polymerase catalyzes the transcription of DNA into RNA using the four ribonucleoside triphosphates as substrates. In Dehalococcoides mccartyi (strain ATCC BAA-2266 / KCTC 15142 / 195) (Dehalococcoides ethenogenes (strain 195)), this protein is DNA-directed RNA polymerase subunit beta'.